Here is a 693-residue protein sequence, read N- to C-terminus: Methionine--tRNA ligase (693 aa).

Positions 12–22 (PYANGPLHLGH) match the 'HIGH' region motif. The Zn(2+) site is built by Cys143, Cys146, Cys156, and Cys159. A 'KMSKS' region motif is present at residues 330 to 334 (KMSKS). Residue Lys333 participates in ATP binding. The tract at residues 557 to 576 (APTAKNEAAKPAAPAAAKTE) is disordered. Positions 590-693 (DFAKLDLRIG…SGAQPGMPVR (104 aa)) constitute a tRNA-binding domain.

It belongs to the class-I aminoacyl-tRNA synthetase family. MetG type 1 subfamily. As to quaternary structure, homodimer. Zn(2+) is required as a cofactor.

It localises to the cytoplasm. The catalysed reaction is tRNA(Met) + L-methionine + ATP = L-methionyl-tRNA(Met) + AMP + diphosphate. Its function is as follows. Is required not only for elongation of protein synthesis but also for the initiation of all mRNA translation through initiator tRNA(fMet) aminoacylation. This is Methionine--tRNA ligase from Stenotrophomonas maltophilia (strain R551-3).